Reading from the N-terminus, the 214-residue chain is MIALELSVPVACWRKGRARELVETEVLPPPATCYGALLSLVGEQDRERHRGCRVTAGVLNAPVISTVLRTFWRSKNLKVAKGNDENAAPDQQQLVIDARLVVWCDSREEPDSGESLEDRVVRAMREPGSVTRAGGWSLGESTHLINDARLLPEGRPPAGCRAFLTASTGALTLPVWVDHVGTRGTRYEVGRLEEVLAAPEVQRLPRIPLAEGAG.

It belongs to the CRISPR-associated protein Cas5 family.

Its function is as follows. CRISPR (clustered regularly interspaced short palindromic repeat) is an adaptive immune system that provides protection against mobile genetic elements (viruses, transposable elements and conjugative plasmids). CRISPR clusters contain spacers, sequences complementary to antecedent mobile elements, and target invading nucleic acids. CRISPR clusters are transcribed and processed into CRISPR RNA (crRNA). Has a role in fruiting body development, sporulation and aggregation. This Myxococcus xanthus (strain DK1622) protein is CRISPR-associated protein Cas5 (devS).